The chain runs to 497 residues: Glycerol kinase (497 aa).

Thr-13 provides a ligand contact to ADP. Residues Thr-13, Thr-14, and Ser-15 each coordinate ATP. Position 13 (Thr-13) interacts with sn-glycerol 3-phosphate. Residue Arg-17 coordinates ADP. Arg-83, Glu-84, and Tyr-135 together coordinate sn-glycerol 3-phosphate. Arg-83, Glu-84, and Tyr-135 together coordinate glycerol. Residue His-231 is modified to Phosphohistidine; by HPr. Sn-glycerol 3-phosphate is bound at residue Asp-245. 2 residues coordinate glycerol: Asp-245 and Gln-246. Positions 267 and 310 each coordinate ADP. ATP-binding residues include Thr-267, Gly-310, Gln-314, and Gly-411. The ADP site is built by Gly-411 and Asn-415.

Belongs to the FGGY kinase family. As to quaternary structure, homotetramer and homodimer (in equilibrium). In terms of processing, the phosphoenolpyruvate-dependent sugar phosphotransferase system (PTS), including enzyme I, and histidine-containing protein (HPr) are required for the phosphorylation, which leads to the activation of the enzyme.

The catalysed reaction is glycerol + ATP = sn-glycerol 3-phosphate + ADP + H(+). It functions in the pathway polyol metabolism; glycerol degradation via glycerol kinase pathway; sn-glycerol 3-phosphate from glycerol: step 1/1. Its activity is regulated as follows. Activated by phosphorylation and inhibited by fructose 1,6-bisphosphate (FBP). Functionally, key enzyme in the regulation of glycerol uptake and metabolism. Catalyzes the phosphorylation of glycerol to yield sn-glycerol 3-phosphate. The protein is Glycerol kinase of Listeria monocytogenes serotype 4b (strain F2365).